The following is a 206-amino-acid chain: Sclerostin domain-containing protein 1 (206 aa).

Positions 1 to 23 are cleaved as a signal peptide; that stretch reads MLPPAIHLSLIPLLCILMKNCLA. The disordered stretch occupies residues 42–62; sequence AHPSSNSTLNQARNGGRHFSS. Positions 43-62 are enriched in polar residues; sequence HPSSNSTLNQARNGGRHFSS. N-linked (GlcNAc...) asparagine glycosylation is present at N47. 4 disulfide bridges follow: C75/C133, C89/C147, C100/C163, and C104/C165. The CTCK domain maps to 75-170; it reads CRELRSTKYI…TACKCKRYTR (96 aa). The N-linked (GlcNAc...) asparagine glycan is linked to N173. Positions 176–206 are disordered; the sequence is SHNFESVSPAKPAQHHRERKRASKSSKHSLS. The segment covering 188–206 has biased composition (basic residues); it reads AQHHRERKRASKSSKHSLS.

This sequence belongs to the sclerostin family. In terms of assembly, interacts with BMP2, BMP4, BMP6 and BMP7 with high affinity. As to expression, highly expressed within the maximally sensitized/receptive endometrium. Weakly expressed in brain, kidney and the female reproductive tract. Expressed in the dermal papilla (DP) and at high level in the precortex of both anagen vibrissae and pelage follicles. Dynymic expression during the hair cycle.

It is found in the secreted. Functionally, directly antagonizes activity of BMP2, BMP4, BMP6 and BMP7 in a dose-dependent manner. May be involved in the onset of endometrial receptivity for implantation/sensitization for the decidual cell reaction. Enhances Wnt signaling and inhibits TGF-beta signaling. This is Sclerostin domain-containing protein 1 (Sostdc1) from Rattus norvegicus (Rat).